The sequence spans 125 residues: Small ribosomal subunit protein uS12 (125 aa).

The segment at Met1–Ala23 is disordered. The residue at position 89 (Asp89) is a 3-methylthioaspartic acid. The disordered stretch occupies residues Ala102 to Lys125. Residues Arg111–Lys125 are compositionally biased toward basic residues.

The protein belongs to the universal ribosomal protein uS12 family. Part of the 30S ribosomal subunit. Contacts proteins S8 and S17. May interact with IF1 in the 30S initiation complex.

With S4 and S5 plays an important role in translational accuracy. Its function is as follows. Interacts with and stabilizes bases of the 16S rRNA that are involved in tRNA selection in the A site and with the mRNA backbone. Located at the interface of the 30S and 50S subunits, it traverses the body of the 30S subunit contacting proteins on the other side and probably holding the rRNA structure together. The combined cluster of proteins S8, S12 and S17 appears to hold together the shoulder and platform of the 30S subunit. This Halorhodospira halophila (strain DSM 244 / SL1) (Ectothiorhodospira halophila (strain DSM 244 / SL1)) protein is Small ribosomal subunit protein uS12.